The sequence spans 420 residues: Phospholipase A1-II 3 (420 aa).

Residues 1 to 21 (MCCFLLVSVLLATTLTDVASA) form the signal peptide. An N-linked (GlcNAc...) asparagine glycan is attached at Asn231. Ser240 serves as the catalytic Acyl-ester intermediate. Residue Ser240 is the Charge relay system of the active site. A glycan (N-linked (GlcNAc...) asparagine) is linked at Asn294. Active-site charge relay system residues include Asp305 and His343. Residues 367–388 (VVDRDLALVNKEVDALRDEYQV) adopt a coiled-coil conformation. Asn403 carries N-linked (GlcNAc...) asparagine glycosylation.

This sequence belongs to the AB hydrolase superfamily. Lipase family.

The protein resides in the secreted. Acylhydrolase that catalyzes the hydrolysis of phospholipids at the sn-1 position. The sequence is that of Phospholipase A1-II 3 from Oryza sativa subsp. japonica (Rice).